A 285-amino-acid chain; its full sequence is 2-dehydro-3-deoxyphosphooctonate aldolase (285 aa).

This sequence belongs to the KdsA family.

The protein resides in the cytoplasm. The enzyme catalyses D-arabinose 5-phosphate + phosphoenolpyruvate + H2O = 3-deoxy-alpha-D-manno-2-octulosonate-8-phosphate + phosphate. It functions in the pathway carbohydrate biosynthesis; 3-deoxy-D-manno-octulosonate biosynthesis; 3-deoxy-D-manno-octulosonate from D-ribulose 5-phosphate: step 2/3. The protein operates within bacterial outer membrane biogenesis; lipopolysaccharide biosynthesis. This chain is 2-dehydro-3-deoxyphosphooctonate aldolase, found in Delftia acidovorans (strain DSM 14801 / SPH-1).